The chain runs to 109 residues: Cell division protein ZapA (109 aa).

The stretch at 71–99 forms a coiled coil; sequence KTRDYASNMEQRIRMLQQTIEQALLEQGR.

This sequence belongs to the ZapA family. Type 1 subfamily. As to quaternary structure, homodimer. Interacts with FtsZ.

Its subcellular location is the cytoplasm. Functionally, activator of cell division through the inhibition of FtsZ GTPase activity, therefore promoting FtsZ assembly into bundles of protofilaments necessary for the formation of the division Z ring. It is recruited early at mid-cell but it is not essential for cell division. The protein is Cell division protein ZapA of Serratia proteamaculans (strain 568).